A 412-amino-acid polypeptide reads, in one-letter code: Serine hydroxymethyltransferase (412 aa).

(6S)-5,6,7,8-tetrahydrofolate is bound by residues L117 and 121-123 (GHL). Position 226 is an N6-(pyridoxal phosphate)lysine (K226). Position 349 to 351 (349 to 351 (SPF)) interacts with (6S)-5,6,7,8-tetrahydrofolate.

This sequence belongs to the SHMT family. As to quaternary structure, homodimer. The cofactor is pyridoxal 5'-phosphate.

It is found in the cytoplasm. The catalysed reaction is (6R)-5,10-methylene-5,6,7,8-tetrahydrofolate + glycine + H2O = (6S)-5,6,7,8-tetrahydrofolate + L-serine. It participates in one-carbon metabolism; tetrahydrofolate interconversion. It functions in the pathway amino-acid biosynthesis; glycine biosynthesis; glycine from L-serine: step 1/1. Its function is as follows. Catalyzes the reversible interconversion of serine and glycine with tetrahydrofolate (THF) serving as the one-carbon carrier. This reaction serves as the major source of one-carbon groups required for the biosynthesis of purines, thymidylate, methionine, and other important biomolecules. Also exhibits THF-independent aldolase activity toward beta-hydroxyamino acids, producing glycine and aldehydes, via a retro-aldol mechanism. The chain is Serine hydroxymethyltransferase from Halothermothrix orenii (strain H 168 / OCM 544 / DSM 9562).